Consider the following 328-residue polypeptide: N-acetyl-gamma-glutamyl-phosphate reductase (328 aa).

The active site involves Cys-143.

It belongs to the NAGSA dehydrogenase family. Type 1 subfamily.

The protein resides in the cytoplasm. It catalyses the reaction N-acetyl-L-glutamate 5-semialdehyde + phosphate + NADP(+) = N-acetyl-L-glutamyl 5-phosphate + NADPH + H(+). It participates in amino-acid biosynthesis; L-arginine biosynthesis; N(2)-acetyl-L-ornithine from L-glutamate: step 3/4. Its function is as follows. Catalyzes the NADPH-dependent reduction of N-acetyl-5-glutamyl phosphate to yield N-acetyl-L-glutamate 5-semialdehyde. This Methanosphaerula palustris (strain ATCC BAA-1556 / DSM 19958 / E1-9c) protein is N-acetyl-gamma-glutamyl-phosphate reductase.